Here is a 355-residue protein sequence, read N- to C-terminus: 3-dehydroquinate synthase (355 aa).

NAD(+) contacts are provided by residues 67–72 (DGEIYK), 101–105 (GVIGD), 125–126 (TT), lysine 138, lysine 147, and 165–168 (FLNT). Zn(2+) is bound by residues glutamate 180, histidine 243, and histidine 260.

Belongs to the sugar phosphate cyclases superfamily. Dehydroquinate synthase family. NAD(+) is required as a cofactor. It depends on Co(2+) as a cofactor. Zn(2+) serves as cofactor.

The protein localises to the cytoplasm. It catalyses the reaction 7-phospho-2-dehydro-3-deoxy-D-arabino-heptonate = 3-dehydroquinate + phosphate. The protein operates within metabolic intermediate biosynthesis; chorismate biosynthesis; chorismate from D-erythrose 4-phosphate and phosphoenolpyruvate: step 2/7. In terms of biological role, catalyzes the conversion of 3-deoxy-D-arabino-heptulosonate 7-phosphate (DAHP) to dehydroquinate (DHQ). This Buchnera aphidicola subsp. Baizongia pistaciae (strain Bp) protein is 3-dehydroquinate synthase.